A 196-amino-acid chain; its full sequence is Holliday junction branch migration complex subunit RuvA (196 aa).

Positions 1-63 are domain I; sequence MINKIYGKIV…DDDVKLFGFL (63 aa). The interval 64–142 is domain II; the sequence is NISEREVFED…KGDESSSYML (79 aa). A region of interest (flexible linker) is located at residue Lys143. The interval 143 to 196 is domain III; sequence KFKELEQSIVNMGFDRKLVVVAFREIMLSDKFLILKEAEQEQFLFTETLKRLSV.

This sequence belongs to the RuvA family. Homotetramer. Forms an RuvA(8)-RuvB(12)-Holliday junction (HJ) complex. HJ DNA is sandwiched between 2 RuvA tetramers; dsDNA enters through RuvA and exits via RuvB. An RuvB hexamer assembles on each DNA strand where it exits the tetramer. Each RuvB hexamer is contacted by two RuvA subunits (via domain III) on 2 adjacent RuvB subunits; this complex drives branch migration. In the full resolvosome a probable DNA-RuvA(4)-RuvB(12)-RuvC(2) complex forms which resolves the HJ.

It is found in the cytoplasm. Functionally, the RuvA-RuvB-RuvC complex processes Holliday junction (HJ) DNA during genetic recombination and DNA repair, while the RuvA-RuvB complex plays an important role in the rescue of blocked DNA replication forks via replication fork reversal (RFR). RuvA specifically binds to HJ cruciform DNA, conferring on it an open structure. The RuvB hexamer acts as an ATP-dependent pump, pulling dsDNA into and through the RuvAB complex. HJ branch migration allows RuvC to scan DNA until it finds its consensus sequence, where it cleaves and resolves the cruciform DNA. This Borrelia duttonii (strain Ly) protein is Holliday junction branch migration complex subunit RuvA.